A 185-amino-acid chain; its full sequence is Small ribosomal subunit protein uS7 (185 aa).

Belongs to the universal ribosomal protein uS7 family. As to quaternary structure, part of the 30S ribosomal subunit.

In terms of biological role, one of the primary rRNA binding proteins, it binds directly to 16S rRNA where it nucleates assembly of the head domain of the 30S subunit. Is located at the subunit interface close to the decoding center. In Methanothrix thermoacetophila (strain DSM 6194 / JCM 14653 / NBRC 101360 / PT) (Methanosaeta thermophila), this protein is Small ribosomal subunit protein uS7.